The following is a 212-amino-acid chain: Ribonuclease HII (212 aa).

Residues 17–206 (RVIAGVDEAG…KSTKPQSLQT (190 aa)) form the RNase H type-2 domain. Positions 23, 24, and 115 each coordinate a divalent metal cation.

This sequence belongs to the RNase HII family. Mn(2+) serves as cofactor. Mg(2+) is required as a cofactor.

The protein localises to the cytoplasm. It catalyses the reaction Endonucleolytic cleavage to 5'-phosphomonoester.. Endonuclease that specifically degrades the RNA of RNA-DNA hybrids. The polypeptide is Ribonuclease HII (Syntrophus aciditrophicus (strain SB)).